The chain runs to 301 residues: NADH-cytochrome b5 reductase 3 (301 aa).

Residue Gly2 is the site of N-myristoyl glycine attachment. In terms of domain architecture, FAD-binding FR-type spans 40–152 (DIKYSLRLID…RGPNGLLVYQ (113 aa)). Lys42 is subject to N6-acetyllysine. Tyr43 is modified (phosphotyrosine). Arg92, Pro93, Tyr94, Val109, Lys111, and Phe114 together coordinate FAD. Lys120 is modified (N6-acetyllysine). Residues Lys126, Met127, Ser128, and Thr185 each coordinate FAD.

The protein belongs to the flavoprotein pyridine nucleotide cytochrome reductase family. As to quaternary structure, component of a complex composed of cytochrome b5, NADH-cytochrome b5 reductase (CYB5R3) and MTARC2. Interacts with MTLN; the interaction is required to maintain cellular lipid composition and leads to stimulation of mitochondrial respiratory complex I activity. Requires FAD as cofactor.

The protein resides in the endoplasmic reticulum membrane. It is found in the mitochondrion outer membrane. The enzyme catalyses 2 Fe(III)-[cytochrome b5] + NADH = 2 Fe(II)-[cytochrome b5] + NAD(+) + H(+). In terms of biological role, catalyzes the reduction of two molecules of cytochrome b5 using NADH as the electron donor. This is NADH-cytochrome b5 reductase 3 (CYB5R3) from Macaca fascicularis (Crab-eating macaque).